We begin with the raw amino-acid sequence, 375 residues long: UDP-N-acetylglucosamine--N-acetylmuramyl-(pentapeptide) pyrophosphoryl-undecaprenol N-acetylglucosamine transferase (375 aa).

UDP-N-acetyl-alpha-D-glucosamine is bound by residues 13 to 15, asparagine 124, arginine 165, serine 193, and glutamine 294; that span reads TGG.

Belongs to the glycosyltransferase 28 family. MurG subfamily.

It is found in the cell inner membrane. It catalyses the reaction di-trans,octa-cis-undecaprenyl diphospho-N-acetyl-alpha-D-muramoyl-L-alanyl-D-glutamyl-meso-2,6-diaminopimeloyl-D-alanyl-D-alanine + UDP-N-acetyl-alpha-D-glucosamine = di-trans,octa-cis-undecaprenyl diphospho-[N-acetyl-alpha-D-glucosaminyl-(1-&gt;4)]-N-acetyl-alpha-D-muramoyl-L-alanyl-D-glutamyl-meso-2,6-diaminopimeloyl-D-alanyl-D-alanine + UDP + H(+). It functions in the pathway cell wall biogenesis; peptidoglycan biosynthesis. In terms of biological role, cell wall formation. Catalyzes the transfer of a GlcNAc subunit on undecaprenyl-pyrophosphoryl-MurNAc-pentapeptide (lipid intermediate I) to form undecaprenyl-pyrophosphoryl-MurNAc-(pentapeptide)GlcNAc (lipid intermediate II). This is UDP-N-acetylglucosamine--N-acetylmuramyl-(pentapeptide) pyrophosphoryl-undecaprenol N-acetylglucosamine transferase from Mesorhizobium japonicum (strain LMG 29417 / CECT 9101 / MAFF 303099) (Mesorhizobium loti (strain MAFF 303099)).